Consider the following 49-residue polypeptide: IgW transmembrane form Tm2T7/Tm7T7/Tm3T3 (49 aa).

An N-linked (GlcNAc...) asparagine glycan is attached at asparagine 3. The chain crosses the membrane as a helical span at residues 25–45 (VAAFAILFILSFLYSTFVTVV).

Expressed in the spleen. May also be expressed in other lymphoid tissues.

It is found in the membrane. The chain is IgW transmembrane form Tm2T7/Tm7T7/Tm3T3 from Heterodontus francisci (Horn shark).